Consider the following 183-residue polypeptide: ATP synthase subunit b, chloroplastic (183 aa).

A helical membrane pass occupies residues leucine 27 to leucine 49.

The protein belongs to the ATPase B chain family. As to quaternary structure, F-type ATPases have 2 components, F(1) - the catalytic core - and F(0) - the membrane proton channel. F(1) has five subunits: alpha(3), beta(3), gamma(1), delta(1), epsilon(1). F(0) has four main subunits: a(1), b(1), b'(1) and c(10-14). The alpha and beta chains form an alternating ring which encloses part of the gamma chain. F(1) is attached to F(0) by a central stalk formed by the gamma and epsilon chains, while a peripheral stalk is formed by the delta, b and b' chains.

It localises to the plastid. Its subcellular location is the chloroplast thylakoid membrane. Functionally, f(1)F(0) ATP synthase produces ATP from ADP in the presence of a proton or sodium gradient. F-type ATPases consist of two structural domains, F(1) containing the extramembraneous catalytic core and F(0) containing the membrane proton channel, linked together by a central stalk and a peripheral stalk. During catalysis, ATP synthesis in the catalytic domain of F(1) is coupled via a rotary mechanism of the central stalk subunits to proton translocation. In terms of biological role, component of the F(0) channel, it forms part of the peripheral stalk, linking F(1) to F(0). In Brachypodium distachyon (Purple false brome), this protein is ATP synthase subunit b, chloroplastic.